The sequence spans 298 residues: Sulfate adenylyltransferase subunit 2 (298 aa).

Basic and acidic residues-rich tracts occupy residues Arg272 to Asp282 and Met289 to Phe298. The interval Arg272–Phe298 is disordered.

The protein belongs to the PAPS reductase family. CysD subfamily. Heterodimer composed of CysD, the smaller subunit, and CysN.

The enzyme catalyses sulfate + ATP + H(+) = adenosine 5'-phosphosulfate + diphosphate. Its pathway is sulfur metabolism; hydrogen sulfide biosynthesis; sulfite from sulfate: step 1/3. With CysN forms the ATP sulfurylase (ATPS) that catalyzes the adenylation of sulfate producing adenosine 5'-phosphosulfate (APS) and diphosphate, the first enzymatic step in sulfur assimilation pathway. APS synthesis involves the formation of a high-energy phosphoric-sulfuric acid anhydride bond driven by GTP hydrolysis by CysN coupled to ATP hydrolysis by CysD. The chain is Sulfate adenylyltransferase subunit 2 from Burkholderia lata (strain ATCC 17760 / DSM 23089 / LMG 22485 / NCIMB 9086 / R18194 / 383).